Here is an 876-residue protein sequence, read N- to C-terminus: Liprin-beta-2 (876 aa).

A coiled-coil region spans residues 101–313 (AASNETYQER…TGLLNQYRKV (213 aa)). Serine 329, serine 363, and serine 387 each carry phosphoserine. The tract at residues 356 to 376 (EMPPRCSSPTVGPPPLPQKSL) is disordered. Disordered stretches follow at residues 425 to 451 (LPGK…PDAT) and 470 to 500 (VVND…PKGI). The span at 473–489 (DLSSTSSGTESGPQSPL) shows a compositional bias: polar residues. Serine 512 carries the post-translational modification Phosphoserine. The disordered stretch occupies residues 527 to 553 (RGGLRATAGPRLSRTRDSKGQKSDANA). SAM domains lie at 558–622 (WSTE…INTK), 630–693 (LDHI…LHVN), and 718–783 (WSNH…KFNA).

Belongs to the liprin family. Liprin-beta subfamily. Forms homodimers and heterodimers. Widely expressed.

Its function is as follows. May regulate the disassembly of focal adhesions. Did not bind receptor-like tyrosine phosphatases type 2A. This chain is Liprin-beta-2 (PPFIBP2), found in Homo sapiens (Human).